A 219-amino-acid polypeptide reads, in one-letter code: DAN domain family member 5 (219 aa).

The signal sequence occupies residues 1–19 (MLLFRAASLLPLLCFTVGA). Intrachain disulfides connect cysteine 118–cysteine 165, cysteine 132–cysteine 179, cysteine 142–cysteine 195, and cysteine 146–cysteine 197. One can recognise a CTCK domain in the interval 118-198 (CHALPFIQNV…VELVEECECE (81 aa)).

Belongs to the DAN family. As to quaternary structure, interacts with nr1-a.

The protein localises to the secreted. Functionally, plays an important role in regulating the left-right axis by blocking a tgfb1 cascade in the right posterior paraxial mesoderm. Functions as an inhibitor of bmp, tgfb1, nodal, activin and wnt signaling in the ectoderm. May inhibit mesodermal signals, probably through an inhibition of nodal/activin pathways. Seems to regulates cell fate specification and competence before the onset of neural induction. Expression in the entire ectodermal region prior to gastrulation might act to prevent fate specification in the ectoderm and ensure the maintenance of the stem-cell-like properties exhibited by ectodermal cells. In Xenopus tropicalis (Western clawed frog), this protein is DAN domain family member 5 (dand5).